The following is a 202-amino-acid chain: dTTP/UTP pyrophosphatase (202 aa).

Asp-74 serves as the catalytic Proton acceptor.

Belongs to the Maf family. YhdE subfamily. It depends on a divalent metal cation as a cofactor.

Its subcellular location is the cytoplasm. The catalysed reaction is dTTP + H2O = dTMP + diphosphate + H(+). It carries out the reaction UTP + H2O = UMP + diphosphate + H(+). Functionally, nucleoside triphosphate pyrophosphatase that hydrolyzes dTTP and UTP. May have a dual role in cell division arrest and in preventing the incorporation of modified nucleotides into cellular nucleic acids. The chain is dTTP/UTP pyrophosphatase from Methylococcus capsulatus (strain ATCC 33009 / NCIMB 11132 / Bath).